The following is a 105-amino-acid chain: uncharacterized protein (105 aa).

This is an uncharacterized protein from Acidianus bottle-shaped virus (isolate Italy/Pozzuoli) (ABV).